Here is a 340-residue protein sequence, read N- to C-terminus: Fructose-1,6-bisphosphatase class 1 (340 aa).

Positions 107, 126, 128, and 129 each coordinate Mg(2+). Residue Asn-215 participates in substrate binding. Position 287 (Glu-287) interacts with Mg(2+).

It belongs to the FBPase class 1 family. As to quaternary structure, homotetramer. Mg(2+) serves as cofactor.

Its subcellular location is the cytoplasm. The catalysed reaction is beta-D-fructose 1,6-bisphosphate + H2O = beta-D-fructose 6-phosphate + phosphate. It functions in the pathway carbohydrate biosynthesis; gluconeogenesis. This chain is Fructose-1,6-bisphosphatase class 1, found in Brucella canis (strain ATCC 23365 / NCTC 10854 / RM-666).